We begin with the raw amino-acid sequence, 542 residues long: Malate synthase, glyoxysomal (542 aa).

Catalysis depends on Arg168, which acts as the Proton acceptor. The Proton donor role is filled by Asp449. A Microbody targeting signal motif is present at residues 540–542; it reads SKL.

It belongs to the malate synthase family.

It localises to the glyoxysome. It carries out the reaction glyoxylate + acetyl-CoA + H2O = (S)-malate + CoA + H(+). Its pathway is carbohydrate metabolism; glyoxylate cycle; (S)-malate from isocitrate: step 2/2. The sequence is that of Malate synthase, glyoxysomal (acu-9) from Neurospora crassa (strain ATCC 24698 / 74-OR23-1A / CBS 708.71 / DSM 1257 / FGSC 987).